The primary structure comprises 115 residues: Somatostatin-1 (115 aa).

The first 24 residues, 1 to 24 (MQSCRVQCALTLLSLALAINSISA), serve as a signal peptide directing secretion. Residues 25–99 (APTDPRLRQF…NSSPALAPRE (75 aa)) constitute a propeptide that is removed on maturation. The segment at 60 to 79 (SQTDNEALESDDLPRGAEQD) is disordered. A disulfide bridge links cysteine 104 with cysteine 115.

The protein belongs to the somatostatin family.

The protein localises to the secreted. In terms of biological role, somatostatin inhibits the release of somatotropin. The polypeptide is Somatostatin-1 (sst1) (Pelophylax ridibundus (Marsh frog)).